The chain runs to 208 residues: Uracil phosphoribosyltransferase (208 aa).

5-phospho-alpha-D-ribose 1-diphosphate contacts are provided by residues arginine 78, arginine 103, and 130–138; that span reads DPMLATGGS. Residues isoleucine 193 and 198-200 each bind uracil; that span reads GDA. Aspartate 199 contacts 5-phospho-alpha-D-ribose 1-diphosphate.

Belongs to the UPRTase family. The cofactor is Mg(2+).

It catalyses the reaction UMP + diphosphate = 5-phospho-alpha-D-ribose 1-diphosphate + uracil. Its pathway is pyrimidine metabolism; UMP biosynthesis via salvage pathway; UMP from uracil: step 1/1. Allosterically activated by GTP. Catalyzes the conversion of uracil and 5-phospho-alpha-D-ribose 1-diphosphate (PRPP) to UMP and diphosphate. In Escherichia fergusonii (strain ATCC 35469 / DSM 13698 / CCUG 18766 / IAM 14443 / JCM 21226 / LMG 7866 / NBRC 102419 / NCTC 12128 / CDC 0568-73), this protein is Uracil phosphoribosyltransferase.